Consider the following 269-residue polypeptide: Triosephosphate isomerase (269 aa).

8 to 10 (NWK) contributes to the substrate binding site. H105 acts as the Electrophile in catalysis. Catalysis depends on E183, which acts as the Proton acceptor. Substrate is bound by residues G189, S227, and 248 to 249 (GG).

It belongs to the triosephosphate isomerase family. In terms of assembly, homodimer.

The protein resides in the cytoplasm. It catalyses the reaction D-glyceraldehyde 3-phosphate = dihydroxyacetone phosphate. Its pathway is carbohydrate biosynthesis; gluconeogenesis. It participates in carbohydrate degradation; glycolysis; D-glyceraldehyde 3-phosphate from glycerone phosphate: step 1/1. Functionally, involved in the gluconeogenesis. Catalyzes stereospecifically the conversion of dihydroxyacetone phosphate (DHAP) to D-glyceraldehyde-3-phosphate (G3P). The sequence is that of Triosephosphate isomerase from Psychrobacter arcticus (strain DSM 17307 / VKM B-2377 / 273-4).